The primary structure comprises 361 residues: 3-dehydroquinate synthase (361 aa).

NAD(+) is bound by residues 107 to 111, 131 to 132, K144, and K153; these read GVIGD and TS. 3 residues coordinate Zn(2+): E186, H251, and H268.

This sequence belongs to the sugar phosphate cyclases superfamily. Dehydroquinate synthase family. It depends on NAD(+) as a cofactor. Co(2+) is required as a cofactor. Zn(2+) serves as cofactor.

It localises to the cytoplasm. The catalysed reaction is 7-phospho-2-dehydro-3-deoxy-D-arabino-heptonate = 3-dehydroquinate + phosphate. Its pathway is metabolic intermediate biosynthesis; chorismate biosynthesis; chorismate from D-erythrose 4-phosphate and phosphoenolpyruvate: step 2/7. Functionally, catalyzes the conversion of 3-deoxy-D-arabino-heptulosonate 7-phosphate (DAHP) to dehydroquinate (DHQ). This chain is 3-dehydroquinate synthase, found in Synechocystis sp. (strain ATCC 27184 / PCC 6803 / Kazusa).